The primary structure comprises 64 residues: Large ribosomal subunit protein eL37 (64 aa).

Zn(2+) is bound by residues C20, C23, C35, and C38. The C4-type zinc finger occupies 20-38 (CRRCGRRAFHVRKKVCAAC).

Belongs to the eukaryotic ribosomal protein eL37 family. The cofactor is Zn(2+).

In terms of biological role, binds to the 23S rRNA. The protein is Large ribosomal subunit protein eL37 of Methanococcus maripaludis (strain C6 / ATCC BAA-1332).